A 217-amino-acid chain; its full sequence is Small ribosomal subunit protein uS3 (217 aa).

The 69-residue stretch at 29–97 (ADYLHEDLAI…AQLNKLTGKQ (69 aa)) folds into the KH type-2 domain.

Belongs to the universal ribosomal protein uS3 family. Part of the 30S ribosomal subunit. Forms a tight complex with proteins S10 and S14.

In terms of biological role, binds the lower part of the 30S subunit head. Binds mRNA in the 70S ribosome, positioning it for translation. The polypeptide is Small ribosomal subunit protein uS3 (Streptococcus mutans serotype c (strain ATCC 700610 / UA159)).